A 517-amino-acid polypeptide reads, in one-letter code: Putative alpha-L-fucosidase 1 (517 aa).

A signal peptide spans 1–20 (MATILLLLLGLLVGLPLLRA). N-linked (GlcNAc...) asparagine glycosylation is found at Asn119, Asn249, Asn296, Asn321, Asn352, Asn496, and Asn511.

Belongs to the glycosyl hydrolase 29 family.

The protein resides in the secreted. It localises to the extracellular space. It is found in the apoplast. It carries out the reaction an alpha-L-fucoside + H2O = L-fucose + an alcohol. Functionally, alpha-L-fucosidase is responsible for hydrolyzing the alpha-1,6-linked fucose joined to the reducing-end N-acetylglucosamine of the carbohydrate moieties of glycoproteins. Active only against 2'-fucosyl-lactitol when heterologously expressed. This Oryza sativa subsp. japonica (Rice) protein is Putative alpha-L-fucosidase 1.